The sequence spans 815 residues: uncharacterized protein (815 aa).

Residues 31–57 constitute a DNA-binding region (zn(2)-C6 fungal-type); sequence CDMCRRKKIKCDGLRPCKNCKAGKLEC. A helical transmembrane segment spans residues 560–580; sequence YWTTVYCGFSTIVTLIFAALL. Disordered regions lie at residues 646-668 and 769-792; these read ESNVPINNGPQQSIDKESNSNTQ and DPDVSDGKSRESSSLNNSTPFNPT. The segment covering 780-792 has biased composition (polar residues); the sequence is SSSLNNSTPFNPT.

It localises to the cytoplasm. The protein localises to the nucleus membrane. This is an uncharacterized protein from Schizosaccharomyces pombe (strain 972 / ATCC 24843) (Fission yeast).